The chain runs to 142 residues: Putative pre-16S rRNA nuclease (142 aa).

It belongs to the YqgF nuclease family.

It is found in the cytoplasm. Its function is as follows. Could be a nuclease involved in processing of the 5'-end of pre-16S rRNA. This chain is Putative pre-16S rRNA nuclease, found in Staphylococcus haemolyticus (strain JCSC1435).